The sequence spans 107 residues: UPF0145 protein ETA_21660 (107 aa).

This sequence belongs to the UPF0145 family.

This Erwinia tasmaniensis (strain DSM 17950 / CFBP 7177 / CIP 109463 / NCPPB 4357 / Et1/99) protein is UPF0145 protein ETA_21660.